A 313-amino-acid polypeptide reads, in one-letter code: Porphobilinogen deaminase (313 aa).

Residue Cys242 is modified to S-(dipyrrolylmethanemethyl)cysteine.

This sequence belongs to the HMBS family. In terms of assembly, monomer. Dipyrromethane is required as a cofactor.

It catalyses the reaction 4 porphobilinogen + H2O = hydroxymethylbilane + 4 NH4(+). It participates in porphyrin-containing compound metabolism; protoporphyrin-IX biosynthesis; coproporphyrinogen-III from 5-aminolevulinate: step 2/4. In terms of biological role, tetrapolymerization of the monopyrrole PBG into the hydroxymethylbilane pre-uroporphyrinogen in several discrete steps. The sequence is that of Porphobilinogen deaminase from Enterobacter sp. (strain 638).